We begin with the raw amino-acid sequence, 315 residues long: tRNA dimethylallyltransferase (315 aa).

10–17 is a binding site for ATP; it reads GPTASGKS. Position 12–17 (12–17) interacts with substrate; sequence TASGKS. The tract at residues 35 to 38 is interaction with substrate tRNA; the sequence is DSMQ.

Belongs to the IPP transferase family. As to quaternary structure, monomer. Requires Mg(2+) as cofactor.

The enzyme catalyses adenosine(37) in tRNA + dimethylallyl diphosphate = N(6)-dimethylallyladenosine(37) in tRNA + diphosphate. Functionally, catalyzes the transfer of a dimethylallyl group onto the adenine at position 37 in tRNAs that read codons beginning with uridine, leading to the formation of N6-(dimethylallyl)adenosine (i(6)A). This is tRNA dimethylallyltransferase from Thermoanaerobacter pseudethanolicus (strain ATCC 33223 / 39E) (Clostridium thermohydrosulfuricum).